The primary structure comprises 116 residues: Large ribosomal subunit protein uL18 (116 aa).

This sequence belongs to the universal ribosomal protein uL18 family. As to quaternary structure, part of the 50S ribosomal subunit; part of the 5S rRNA/L5/L18/L25 subcomplex. Contacts the 5S and 23S rRNAs.

In terms of biological role, this is one of the proteins that bind and probably mediate the attachment of the 5S RNA into the large ribosomal subunit, where it forms part of the central protuberance. The protein is Large ribosomal subunit protein uL18 of Pseudomonas putida (strain GB-1).